The sequence spans 509 residues: O-acetyltransferase anaAT (509 aa).

It belongs to the fumigaclavine B O-acetyltransferase family. Monomer.

The catalysed reaction is (2R,3S,11R)-aszonalenin + acetyl-CoA = (2R,3S,11R)-acetylaszonalenin + CoA. Its pathway is alkaloid biosynthesis. Its function is as follows. O-acetyltransferase; part of the gene cluster that mediates the biosynthesis of the prenylated pyrroloindoline diketopiperazine acetylaszonalenin. The first step in the pathway is the formation of (R)-benzodiazepinedione by condensation of tryptophan and anthranilic acid catalyzed by the non-ribosomal peptide synthetase anaPS. The prenyltransferase anaPT then converts (R)-benzodiazepinedione to aszonalenin in the presence of dimethylallyl diphosphate (DMAPP) via C3-prenylation. The last step in the biosynthesis of acetylaszonalenin via acetylation of aszonalenin at position N1 catalyzed by anaAT. The protein is O-acetyltransferase anaAT of Neosartorya fischeri (strain ATCC 1020 / DSM 3700 / CBS 544.65 / FGSC A1164 / JCM 1740 / NRRL 181 / WB 181) (Aspergillus fischerianus).